The primary structure comprises 299 residues: Mycothiol acetyltransferase (299 aa).

N-acetyltransferase domains follow at residues 1-156 and 149-299; these read MGWT…TYRG and VTMR…ARAL. E33 contributes to the 1D-myo-inositol 2-(L-cysteinylamino)-2-deoxy-alpha-D-glucopyranoside binding site. Residues 75-77 and 83-88 contribute to the acetyl-CoA site; these read LVV and RRGIGT. The 1D-myo-inositol 2-(L-cysteinylamino)-2-deoxy-alpha-D-glucopyranoside site is built by E176, K218, and E231. Acetyl-CoA is bound by residues 235-237 and 242-248; these read VGI and QGRGLGR. Y269 contacts 1D-myo-inositol 2-(L-cysteinylamino)-2-deoxy-alpha-D-glucopyranoside. 274-279 lines the acetyl-CoA pocket; the sequence is NTAALH.

Belongs to the acetyltransferase family. MshD subfamily. Monomer.

The catalysed reaction is 1D-myo-inositol 2-(L-cysteinylamino)-2-deoxy-alpha-D-glucopyranoside + acetyl-CoA = mycothiol + CoA + H(+). Catalyzes the transfer of acetyl from acetyl-CoA to desacetylmycothiol (Cys-GlcN-Ins) to form mycothiol. This is Mycothiol acetyltransferase from Rhodococcus erythropolis (strain PR4 / NBRC 100887).